An 884-amino-acid chain; its full sequence is Valine--tRNA ligase (884 aa).

The short motif at 46-56 (PNVTGKLHLGH) is the 'HIGH' region element. A 'KMSKS' region motif is present at residues 520–524 (KMSKS). Lys-523 lines the ATP pocket. Positions 809 to 844 (LADLLNVEEELARLEKELAKWQKELNMVGKKLSNER) form a coiled coil.

The protein belongs to the class-I aminoacyl-tRNA synthetase family. ValS type 1 subfamily. Monomer.

It is found in the cytoplasm. It carries out the reaction tRNA(Val) + L-valine + ATP = L-valyl-tRNA(Val) + AMP + diphosphate. In terms of biological role, catalyzes the attachment of valine to tRNA(Val). As ValRS can inadvertently accommodate and process structurally similar amino acids such as threonine, to avoid such errors, it has a 'posttransfer' editing activity that hydrolyzes mischarged Thr-tRNA(Val) in a tRNA-dependent manner. The sequence is that of Valine--tRNA ligase from Streptococcus agalactiae serotype III (strain NEM316).